The chain runs to 71 residues: Large ribosomal subunit protein bL28 (71 aa).

It belongs to the bacterial ribosomal protein bL28 family.

This chain is Large ribosomal subunit protein bL28, found in Rubrobacter xylanophilus (strain DSM 9941 / JCM 11954 / NBRC 16129 / PRD-1).